Consider the following 454-residue polypeptide: tRNA modification GTPase MnmE (454 aa).

The (6S)-5-formyl-5,6,7,8-tetrahydrofolate site is built by Arg23, Glu80, and Lys120. The region spanning 216–377 (GMKVVIAGRP…LRNHLKQSMG (162 aa)) is the TrmE-type G domain. Asn226 is a K(+) binding site. GTP contacts are provided by residues 226-231 (NAGKSS), 245-251 (TDIAGTT), 270-273 (DTAG), 335-338 (NKAD), and 358-360 (SAR). Residue Ser230 participates in Mg(2+) binding. K(+)-binding residues include Thr245, Ile247, and Thr250. Residue Thr251 participates in Mg(2+) binding. Lys454 serves as a coordination point for (6S)-5-formyl-5,6,7,8-tetrahydrofolate.

The protein belongs to the TRAFAC class TrmE-Era-EngA-EngB-Septin-like GTPase superfamily. TrmE GTPase family. As to quaternary structure, homodimer. Heterotetramer of two MnmE and two MnmG subunits. It depends on K(+) as a cofactor.

The protein localises to the cytoplasm. Functionally, exhibits a very high intrinsic GTPase hydrolysis rate. Involved in the addition of a carboxymethylaminomethyl (cmnm) group at the wobble position (U34) of certain tRNAs, forming tRNA-cmnm(5)s(2)U34. The protein is tRNA modification GTPase MnmE of Escherichia coli (strain SMS-3-5 / SECEC).